The following is an 813-amino-acid chain: Nuclear pore complex protein 5 (813 aa).

The protein belongs to the nucleoporin Nup84/Nup107 family. Part of the nuclear pore complex (NPC). May interact with mdf-1.

The protein localises to the nucleus. It is found in the nuclear pore complex. Its subcellular location is the chromosome. The protein resides in the centromere. It localises to the kinetochore. The protein localises to the nucleus membrane. Involved in kinetochore assembly and chromosome segregation during embryonic mitosis. Required for the localization of the NDC80 complex member him-10, the chromosomal passenger complex component air-2 and nuclear pore complex proteins npp-23 and npp-15 to kinetochores during metaphase. Required for npp-23 localization to the nuclear envelope during interphase. Recruits mdf-1, a component of the spindle assembly checkpoint, to the nuclear envelope. Appears dispensable for the assembly of the nuclear pore complex and for nuclear protein import. The protein is Nuclear pore complex protein 5 of Caenorhabditis elegans.